Here is a 348-residue protein sequence, read N- to C-terminus: Flagellar P-ring protein (348 aa).

Positions 1 to 16 (MRVLTIFLLFMTSIFA) are cleaved as a signal peptide.

Belongs to the FlgI family. In terms of assembly, the basal body constitutes a major portion of the flagellar organelle and consists of four rings (L,P,S, and M) mounted on a central rod.

It localises to the periplasm. The protein resides in the bacterial flagellum basal body. Functionally, assembles around the rod to form the L-ring and probably protects the motor/basal body from shearing forces during rotation. The polypeptide is Flagellar P-ring protein (Campylobacter jejuni subsp. jejuni serotype O:6 (strain 81116 / NCTC 11828)).